Here is a 196-residue protein sequence, read N- to C-terminus: Calmodulin-like protein 4 (196 aa).

Residues 1 to 43 (MAAEHLLPGPPPSLADFRLEAGGKGTERGSGSSKPTGSSRGPR) form a disordered region. Residues 17–27 (FRLEAGGKGTE) show a composition bias toward basic and acidic residues. Polar residues predominate over residues 29 to 39 (GSGSSKPTGSS). 4 consecutive EF-hand domains span residues 51-86 (DQIN…LGAS), 87-122 (PTPG…QIKQ), 124-159 (DPKK…LGEK), and 160-195 (LTHK…PGRD).

It belongs to the calmodulin family. In terms of assembly, interacts with MYO7B; the interaction mediates the association of CALML4 with the IMAC/intermicrovillar adhesion complex. Interacts with MYO7A. As to expression, expressed in the intestinal tract. In terms of tissue distribution, dominant transcript in the intestinal tract.

The protein resides in the cell projection. It localises to the microvillus. In terms of biological role, as part of the intermicrovillar adhesion complex/IMAC plays a role in epithelial brush border differentiation, controlling microvilli organization and length. Acts as a light chain for MYO7B and is required for efficient targeting of the IMAC to the tips of border brush microvilli. In Homo sapiens (Human), this protein is Calmodulin-like protein 4.